The sequence spans 368 residues: Alanine racemase (368 aa).

Lys40 (proton acceptor; specific for D-alanine) is an active-site residue. Lys40 is subject to N6-(pyridoxal phosphate)lysine. Substrate is bound at residue Arg134. Tyr263 acts as the Proton acceptor; specific for L-alanine in catalysis. Met310 contacts substrate.

This sequence belongs to the alanine racemase family. Pyridoxal 5'-phosphate serves as cofactor.

It catalyses the reaction L-alanine = D-alanine. It participates in amino-acid biosynthesis; D-alanine biosynthesis; D-alanine from L-alanine: step 1/1. Functionally, catalyzes the interconversion of L-alanine and D-alanine. May also act on other amino acids. The sequence is that of Alanine racemase (alr) from Listeria monocytogenes serotype 1/2a (strain 10403S).